A 285-amino-acid chain; its full sequence is MGILIALIPAIAWGSIGLISGRMGGTARQQTLGMTMGALVFGLALWAVEQPTLTSKIWLIGIVSGLFWSIGQGQQFTSMKAVGISRTTPISTGMQLVANALAGVLLFNEWHGNMYWIGSASVIVLIAGAVLTSLTDKTDPNRSASENWGVGIRALILSTIGYAGYTIVVHYGNVNAQAVVMPQAVGMLLGALIWSFKDKPWVVKATYRNIVTGLVWGIGNLFMFMAMAQIGQAVAYSLSQMGIVISTFGSIYLLGEHKTKREMVYVVIGSILVIVGGVALSLMKA.

Transmembrane regions (helical) follow at residues 2 to 21, 31 to 48, 55 to 72, 112 to 134, 147 to 169, 179 to 196, 209 to 228, 233 to 255, and 264 to 283; these read GILI…LISG, TLGM…LWAV, SKIW…SIGQ, GNMY…LTSL, NWGV…TIVV, VVMP…IWSF, NIVT…MAMA, AVAY…YLLG, and VYVV…LSLM.

Belongs to the GRP transporter (TC 2.A.7.5) family.

Its subcellular location is the cell membrane. This is Putative sugar uptake protein lp_2503 from Lactiplantibacillus plantarum (strain ATCC BAA-793 / NCIMB 8826 / WCFS1) (Lactobacillus plantarum).